The sequence spans 487 residues: DNA-dependent metalloprotease SPRTN (487 aa).

Methionine 1 is modified (N-acetylmethionine). Positions leucine 45–isoleucine 212 constitute a SprT-like domain. Position 111 (histidine 111) interacts with Zn(2+). Glutamate 112 is a catalytic residue. Zn(2+) is bound by residues histidine 115 and histidine 130. The segment at serine 219–glutamine 248 is disordered. The segment covering lysine 220 to lysine 230 has biased composition (basic residues). Lysine 230 bears the N6-acetyllysine mark. A compositionally biased stretch (basic and acidic residues) spans alanine 236–lysine 247. The SHP-box motif lies at phenylalanine 253–glycine 261. Serine 267 is modified (phosphoserine). Over residues serine 280–serine 289 the composition is skewed to polar residues. The tract at residues serine 280–proline 317 is disordered. Lysine 302 participates in a covalent cross-link: Glycyl lysine isopeptide (Lys-Gly) (interchain with G-Cter in SUMO2). A compositionally biased stretch (polar residues) spans asparagine 306–proline 317. Positions glutamine 324 to phenylalanine 331 match the PIP-box motif. Lysine 340 participates in a covalent cross-link: Glycyl lysine isopeptide (Lys-Gly) (interchain with G-Cter in SUMO2); alternate. Lysine 340 is covalently cross-linked (Glycyl lysine isopeptide (Lys-Gly) (interchain with G-Cter in ubiquitin); alternate). Residues glycine 347 to arginine 379 form a disordered region. Phosphoserine is present on serine 373. Positions glycine 401–aspartate 412 match the Nuclear localization signal motif. Lysine 413 is covalently cross-linked (Glycyl lysine isopeptide (Lys-Gly) (interchain with G-Cter in ubiquitin)). Residues lysine 422 and lysine 423 each participate in a glycyl lysine isopeptide (Lys-Gly) (interchain with G-Cter in SUMO2) cross-link. The disordered stretch occupies residues glutamine 427–valine 455. A compositionally biased stretch (low complexity) spans serine 435–serine 453. Residues valine 455–serine 482 form a UBZ4-type zinc finger. Cysteine 458, cysteine 461, histidine 473, and cysteine 477 together coordinate Zn(2+). Lysine 486 is covalently cross-linked (Glycyl lysine isopeptide (Lys-Gly) (interchain with G-Cter in SUMO2)).

It belongs to the Spartan family. As to quaternary structure, homodimer. Interacts (VIA PIP-box) with PCNA (when ubiquitinated). Interacts (via its SHP-box) with VCP/p97. Interacts with RAD18. Interacts with KCTD13 and POLD3. It depends on Zn(2+) as a cofactor. In terms of processing, autocatalytically cleaved in response to double-stranded DNA-binding: autocatalytic cleavage takes place in trans and leads to inactivation. Monoubiquitinated; monoubiquitination promotes exclusion from chromatin. Deubiquitinated by VCPIP1: deubiquitination is required for subsequent acetylation and recruitment to chromatin and DNA damage sites. Post-translationally, acetylated following deubiquitination by VCPIP1, leading to recruitment to chromatin and DNA damage sites. In terms of processing, phosphorylation by CHEK1 promotes recruitment to chromatin.

It localises to the nucleus. It is found in the chromosome. Its activity is regulated as follows. DNA-binding activates the protease activity: single-stranded DNA-binding specifically activates ability to cleave covalent DNA-protein cross-links (DPCs). In contrast, double-stranded DNA-binding specifically activates autocatalytic cleavage, and subsequent inactivation. Functionally, DNA-dependent metalloendopeptidase that mediates the proteolytic cleavage of covalent DNA-protein cross-links (DPCs) during DNA synthesis, thereby playing a key role in maintaining genomic integrity. DPCs are highly toxic DNA lesions that interfere with essential chromatin transactions, such as replication and transcription, and which are induced by reactive agents, such as UV light or formaldehyde. Associates with the DNA replication machinery and specifically removes DPCs during DNA synthesis. Catalyzes proteolytic cleavage of the HMCES DNA-protein cross-link following unfolding by the BRIP1/FANCJ helicase. Acts as a pleiotropic protease for DNA-binding proteins cross-linked with DNA, such as TOP1, TOP2A, histones H3 and H4. Mediates degradation of DPCs that are not ubiquitinated, while it is not able to degrade ubiquitinated DPCs. SPRTN activation requires polymerase collision with DPCs followed by helicase bypass of DPCs. Involved in recruitment of VCP/p97 to sites of DNA damage. Also acts as an activator of CHEK1 during normal DNA replication by mediating proteolytic cleavage of CHEK1, thereby promoting CHEK1 removal from chromatin and subsequent activation. Does not activate CHEK1 in response to DNA damage. May also act as a 'reader' of ubiquitinated PCNA: recruited to sites of UV damage and interacts with ubiquitinated PCNA and RAD18, the E3 ubiquitin ligase that monoubiquitinates PCNA. Facilitates chromatin association of RAD18 and is required for efficient PCNA monoubiquitination, promoting a feed-forward loop to enhance PCNA ubiquitination and translesion DNA synthesis. The protein is DNA-dependent metalloprotease SPRTN of Bos taurus (Bovine).